Here is a 556-residue protein sequence, read N- to C-terminus: MKTDIEIAQEATMKPITEIAQGLDLLEDEIELYGKYKAKVNFSAWERLKDKPDAKLILVTAINPTPAGEGKTTTTVGLGQAMSKIGKNAMIALREPSLGPCFGVKGGAAGGGYAQVVPMEDINLHFTGDFHAITSTHNLLAALLDNHIQQGNLLNIDPRQIVFRRVMDMNDRALRKIVIGLGGRTEGIPRENGFDITVASEIMAILCLAKDLMDLKERFGRIVVAYTYDGKAITAHDLEAEGAMALLMKDAIKPNLVQTLENTPVFIHGGPFANIAHGCNSVVATRMAMKLADYVITEAGFGADLGAEKFYDLKCRFAELKPAATVIVATVRALKMNGGVAKEDLGPENLEALAKGIVNLEKHIENIGKFGVPAVVAINRFPTDTDAELEFVAERCRQLGAEFALSEVFTKGGEGGIELAKAVLNIVDNKESNFHVLYELDLPIAKKIETICKEVYGADGVNFTKEALTSMKKYEELGYGQLPICMAKTQYSLTDDQNVLGRPSGFTITVRELRLSAGAGFLVAITGAIMTMPGLPKRPAALRMDIDAAGRITGLF.

Residue 65–72 (TPAGEGKT) participates in ATP binding.

It belongs to the formate--tetrahydrofolate ligase family.

The enzyme catalyses (6S)-5,6,7,8-tetrahydrofolate + formate + ATP = (6R)-10-formyltetrahydrofolate + ADP + phosphate. Its pathway is one-carbon metabolism; tetrahydrofolate interconversion. This is Formate--tetrahydrofolate ligase 1 from Desulfitobacterium hafniense (strain Y51).